The sequence spans 230 residues: Sodium channel modifier 1 (230 aa).

Ser-2 bears the Phosphoserine mark. A Bipartite nuclear localization signal motif is present at residues 4–20; the sequence is KREGDDWSQLNVLKKRR. Residues 42–74 form a Matrin-type zinc finger; sequence FACAICPHRPVLDTLAMLTAHRAGKKHLSSLQL. Residue Lys-67 forms a Glycyl lysine isopeptide (Lys-Gly) (interchain with G-Cter in SUMO2) linkage. 2 disordered regions span residues 76-106 and 129-191; these read YGKK…EAPL and RRKY…RALD. Residues 89-100 are compositionally biased toward basic and acidic residues; that stretch reads PRQHNELRREET. Residues 142-151 show a composition bias toward pro residues; it reads SRPPLPPPEV. Residues 167 to 180 show a composition bias toward polar residues; the sequence is GSQTKESATVSSPA. 2 positions are modified to phosphoserine: Ser-183 and Ser-219. A required for interaction with LUC7L2 region spans residues 188–230; sequence RALDHYLTLRSSGWIPDGRGRWIKDENVEFDSDEEEPPDLPLD.

In terms of assembly, component of the minor spliceosome. Within this complex, interacts with RNF113A, as well as with SF3B1/SF3b155, SF3B2/SF3b145, SF3B3/SF3b130 and CDC5L. May interact with LUC7L2 and SNRNP70.

The protein localises to the nucleus. It is found in the nucleoplasm. It localises to the nucleus speckle. Its function is as follows. As a component of the minor spliceosome, involved in the splicing of U12-type introns in pre-mRNAs. Plays a role in the regulation of primary cilia length and Hedgehog signaling. The polypeptide is Sodium channel modifier 1 (SCNM1) (Bos taurus (Bovine)).